A 512-amino-acid polypeptide reads, in one-letter code: Metal transporter Nramp4 (512 aa).

Helical transmembrane passes span 52–72 (LWLFTGPGFLMSIAFLDPGNL), 80–100 (AIAGYSLIWLLMWATAIGLLI), 129–149 (MVLWIMAEIALIGADIQEVIG), 161–181 (LVPLWAGVVITALDCFIFLFL), 189–209 (LEAVFAILIATMALAFAWMFG), 235–255 (AVGIVGCIIMPHNVFLHSALV), 277–297 (IESTGALAVSFIINVFVTTVF), 323–343 (YGGGFFPILYIWAIGVLAAGQ), 371–391 (ALITRSCAIIPTMIVALVFDS), 402–422 (WLNVLQSVQIPFAVIPLLCLV), 440–460 (ISWIVAALVIAINGYLMVDFF), and 468–488 (ILLVPVIIFAIAYVVFVLYLI).

Belongs to the NRAMP (TC 2.A.55) family. Expressed in vascular tissues.

Its subcellular location is the vacuole membrane. In terms of biological role, vacuolar metal transporter involved in intracellular metal homeostasis. Can transport iron (Fe), manganese (Mn) and cadmium (Cd). Regulates metal accumulation under Fe starvation. Acts redundantly with NRAMP3 to mobilize vacuolar Fe and provide sufficient Fe during seed germination. In association with NRAMP3, required for optimal growth and photosynthesis under Mn deficiency. Exports Mn from vacuoles in leaf mesophyll cells, making Mn available for functional photosystem II in chloroplasts. The polypeptide is Metal transporter Nramp4 (NRAMP4) (Arabidopsis thaliana (Mouse-ear cress)).